The primary structure comprises 75 residues: Small ribosomal subunit protein bS18c (75 aa).

This sequence belongs to the bacterial ribosomal protein bS18 family. In terms of assembly, part of the 30S ribosomal subunit.

It is found in the plastid. The protein resides in the chloroplast. In Anthoceros angustus (Hornwort), this protein is Small ribosomal subunit protein bS18c (rps18).